Reading from the N-terminus, the 153-residue chain is Transcriptional repressor NrdR (153 aa).

A zinc finger spans residues 3 to 34; sequence CPFCNNINTQVKDSRAIEDDILIRRRRICLVC. The ATP-cone domain maps to 49 to 139; it reads FMVIKKNGET…VYMNFKNIND (91 aa).

Belongs to the NrdR family. It depends on Zn(2+) as a cofactor.

Functionally, negatively regulates transcription of bacterial ribonucleotide reductase nrd genes and operons by binding to NrdR-boxes. The sequence is that of Transcriptional repressor NrdR from Ehrlichia canis (strain Jake).